The primary structure comprises 503 residues: Cytochrome c lysine N-methyltransferase 1 (503 aa).

In terms of domain architecture, SET spans 52 to 276 (SKFELLRIPR…EEAQVFISYA (225 aa)). The tract at residues 190–291 (NYEKLISTVY…VHFEQIYGFL (102 aa)) is SET-like.

It belongs to the class V-like SAM-binding methyltransferase superfamily.

It localises to the cytoplasm. The protein localises to the cytosol. The catalysed reaction is L-lysyl-[cytochrome c] + S-adenosyl-L-methionine = N(6)-methyl-L-lysyl-[cytochrome c] + S-adenosyl-L-homocysteine + H(+). In terms of biological role, methyltransferase which mediates trimethylation of cytochrome c (CYC1). This chain is Cytochrome c lysine N-methyltransferase 1 (CTM1), found in Kluyveromyces lactis (strain ATCC 8585 / CBS 2359 / DSM 70799 / NBRC 1267 / NRRL Y-1140 / WM37) (Yeast).